Here is a 130-residue protein sequence, read N- to C-terminus: Small ribosomal subunit protein uS8 (130 aa).

The protein belongs to the universal ribosomal protein uS8 family. Component of the 40S ribosomal subunit. Part of the small subunit (SSU) processome, composed of more than 70 proteins and the RNA chaperone small nucleolar RNA (snoRNA) U3.

Its subcellular location is the cytoplasm. It localises to the nucleus. It is found in the nucleolus. Functionally, component of the small ribosomal subunit. Part of the small subunit (SSU) processome, first precursor of the small eukaryotic ribosomal subunit. During the assembly of the SSU processome in the nucleolus, many ribosome biogenesis factors, an RNA chaperone and ribosomal proteins associate with the nascent pre-rRNA and work in concert to generate RNA folding, modifications, rearrangements and cleavage as well as targeted degradation of pre-ribosomal RNA by the RNA exosome. Required for erythropoiesis during embryonic development. The sequence is that of Small ribosomal subunit protein uS8 from Danio rerio (Zebrafish).